The primary structure comprises 293 residues: NAD kinase (293 aa).

Asp68 serves as the catalytic Proton acceptor. NAD(+) is bound by residues 68–69 (DG), 142–143 (ND), Arg153, Asp172, and 183–188 (TAYSLS).

Belongs to the NAD kinase family. A divalent metal cation serves as cofactor.

The protein localises to the cytoplasm. It carries out the reaction NAD(+) + ATP = ADP + NADP(+) + H(+). Functionally, involved in the regulation of the intracellular balance of NAD and NADP, and is a key enzyme in the biosynthesis of NADP. Catalyzes specifically the phosphorylation on 2'-hydroxyl of the adenosine moiety of NAD to yield NADP. The protein is NAD kinase of Lachnospira eligens (strain ATCC 27750 / DSM 3376 / VPI C15-48 / C15-B4) (Eubacterium eligens).